The sequence spans 308 residues: 3'(2'),5'-bisphosphate nucleotidase 1 (308 aa).

The residue at position 2 (Ala2) is an N-acetylalanine. Catalysis depends on Asp51, which acts as the Proton acceptor. Glu74, Asp117, Leu119, and Asp120 together coordinate Mg(2+). The active-site Proton acceptor is the Thr122. Residue Thr122 is modified to Phosphothreonine. AMP-binding residues include Thr195, His198, Gly220, and Lys224. Ser240 is subject to Phosphoserine. Lys244 bears the N6-succinyllysine mark. A Mg(2+)-binding site is contributed by Asp247.

The protein belongs to the inositol monophosphatase superfamily. Mg(2+) serves as cofactor. Widely expressed. Highly expressed in kidney.

The enzyme catalyses adenosine 3',5'-bisphosphate + H2O = AMP + phosphate. The catalysed reaction is adenosine 2',5'-bisphosphate + H2O = AMP + phosphate. It carries out the reaction 3'-phosphoadenylyl sulfate + H2O = adenosine 5'-phosphosulfate + phosphate. It catalyses the reaction 1D-myo-inositol 1,4-bisphosphate + H2O = 1D-myo-inositol 4-phosphate + phosphate. The enzyme catalyses 1D-myo-inositol 1,3,4-trisphosphate + H2O = 1D-myo-inositol 3,4-bisphosphate + phosphate. With respect to regulation, uncompetitively inhibited by Li(+) (IC(50)=157 uM). PAP hydrolysis is competitively inhibited by PAPS (IC(50)=0.7 uM) and by inositol 1,4-bisphosphate (IC(50)=15 uM). In terms of biological role, phosphatase that converts 3'(2')-phosphoadenosine 5'-phosphate (PAP) to AMP and adenosine 3'-phosphate 5'-phosphosulfate (PAPS) to adenosine 5'-phosphosulfate (APS). Is also able to hydrolyze inositol 1,4-bisphosphate (Ins(1,4)P2) and inositol 1,3,4-trisphosphate (Ins(1,3,4)P3), and is not active on Ins(1)P, Ins(4)P, Ins(3,4)P2, Ins(1,4,5)P3, Ins(1,3,4,5)P4, Ins(1,3,4,5,6)P5 or InsP6. Probably prevents the toxic accumulation of PAP, a compound which inhibits a variety of proteins, including PAPS-utilizing enzymes such as sulfotransferases, and RNA processing enzymes. Could also play a role in inositol recycling and phosphoinositide metabolism. In Mus musculus (Mouse), this protein is 3'(2'),5'-bisphosphate nucleotidase 1 (Bpnt1).